The chain runs to 39 residues: Photosystem II reaction center protein J (39 aa).

Residues 7-27 (IPLWLVGLVGGLAVITMLSLF) traverse the membrane as a helical segment.

This sequence belongs to the PsbJ family. PSII is composed of 1 copy each of membrane proteins PsbA, PsbB, PsbC, PsbD, PsbE, PsbF, PsbH, PsbI, PsbJ, PsbK, PsbL, PsbM, PsbT, PsbX, PsbY, PsbZ, Psb30/Ycf12, at least 3 peripheral proteins of the oxygen-evolving complex and a large number of cofactors. It forms dimeric complexes.

It localises to the plastid. The protein localises to the chloroplast thylakoid membrane. Functionally, one of the components of the core complex of photosystem II (PSII). PSII is a light-driven water:plastoquinone oxidoreductase that uses light energy to abstract electrons from H(2)O, generating O(2) and a proton gradient subsequently used for ATP formation. It consists of a core antenna complex that captures photons, and an electron transfer chain that converts photonic excitation into a charge separation. The chain is Photosystem II reaction center protein J from Trieres chinensis (Marine centric diatom).